The following is a 776-amino-acid chain: Homoaconitase, mitochondrial (776 aa).

The transit peptide at 1–24 (MVALRRAVALNAVAIARLQTRALT) directs the protein to the mitochondrion. [4Fe-4S] cluster is bound by residues Cys392, Cys459, and Cys462.

This sequence belongs to the aconitase/IPM isomerase family. The cofactor is [4Fe-4S] cluster.

It localises to the mitochondrion. It carries out the reaction (2R,3S)-homoisocitrate = cis-homoaconitate + H2O. The protein operates within amino-acid biosynthesis; L-lysine biosynthesis via AAA pathway; L-alpha-aminoadipate from 2-oxoglutarate: step 3/5. Catalyzes the reversible hydration of cis-homoaconitate to (2R,3S)-homoisocitrate, a step in the alpha-aminoadipate pathway for lysine biosynthesis. The sequence is that of Homoaconitase, mitochondrial (LYS4) from Gibberella zeae (strain ATCC MYA-4620 / CBS 123657 / FGSC 9075 / NRRL 31084 / PH-1) (Wheat head blight fungus).